The primary structure comprises 308 residues: Ribosomal RNA large subunit methyltransferase F (308 aa).

This sequence belongs to the methyltransferase superfamily. METTL16/RlmF family.

Its subcellular location is the cytoplasm. The enzyme catalyses adenosine(1618) in 23S rRNA + S-adenosyl-L-methionine = N(6)-methyladenosine(1618) in 23S rRNA + S-adenosyl-L-homocysteine + H(+). Its function is as follows. Specifically methylates the adenine in position 1618 of 23S rRNA. This is Ribosomal RNA large subunit methyltransferase F from Salmonella dublin (strain CT_02021853).